The following is a 267-amino-acid chain: Hemin import ATP-binding protein HmuV (267 aa).

Residues leucine 3–arginine 243 enclose the ABC transporter domain. Glycine 35–serine 42 serves as a coordination point for ATP.

It belongs to the ABC transporter superfamily. Heme (hemin) importer (TC 3.A.1.14.5) family. The complex is composed of two ATP-binding proteins (HmuV), two transmembrane proteins (HmuU) and a solute-binding protein (HmuT).

It localises to the cell inner membrane. Functionally, part of the ABC transporter complex HmuTUV involved in hemin import. Responsible for energy coupling to the transport system. The chain is Hemin import ATP-binding protein HmuV from Myxococcus xanthus (strain DK1622).